The chain runs to 484 residues: Glycogen synthase (484 aa).

K15 serves as a coordination point for ADP-alpha-D-glucose.

The protein belongs to the glycosyltransferase 1 family. Bacterial/plant glycogen synthase subfamily.

It catalyses the reaction [(1-&gt;4)-alpha-D-glucosyl](n) + ADP-alpha-D-glucose = [(1-&gt;4)-alpha-D-glucosyl](n+1) + ADP + H(+). Its pathway is glycan biosynthesis; glycogen biosynthesis. Synthesizes alpha-1,4-glucan chains using ADP-glucose. This chain is Glycogen synthase, found in Koribacter versatilis (strain Ellin345).